Here is a 277-residue protein sequence, read N- to C-terminus: S-formylglutathione hydrolase FrmB (277 aa).

Residues serine 145, aspartate 221, and histidine 254 each act as charge relay system in the active site.

Belongs to the esterase D family.

It catalyses the reaction S-formylglutathione + H2O = formate + glutathione + H(+). Its function is as follows. Serine hydrolase involved in the detoxification of formaldehyde. Hydrolyzes S-formylglutathione to glutathione and formate. The sequence is that of S-formylglutathione hydrolase FrmB (frmB) from Escherichia coli O6:K15:H31 (strain 536 / UPEC).